A 439-amino-acid polypeptide reads, in one-letter code: 23S rRNA (uracil(1939)-C(5))-methyltransferase RlmD (439 aa).

One can recognise a TRAM domain in the interval 10 to 68 (KSTQPQRIEFTVDSLDHHCVGIGRHQGKAIFIEGALPGEQVKARILDDKKQYAHAALQQ). Cys81, Cys87, Cys90, and Cys169 together coordinate [4Fe-4S] cluster. The S-adenosyl-L-methionine site is built by Gln273, Phe302, Asn307, Glu323, Asp350, and Asp371. Cys397 acts as the Nucleophile in catalysis.

This sequence belongs to the class I-like SAM-binding methyltransferase superfamily. RNA M5U methyltransferase family. RlmD subfamily.

It catalyses the reaction uridine(1939) in 23S rRNA + S-adenosyl-L-methionine = 5-methyluridine(1939) in 23S rRNA + S-adenosyl-L-homocysteine + H(+). In terms of biological role, catalyzes the formation of 5-methyl-uridine at position 1939 (m5U1939) in 23S rRNA. This Aeromonas salmonicida (strain A449) protein is 23S rRNA (uracil(1939)-C(5))-methyltransferase RlmD.